We begin with the raw amino-acid sequence, 61 residues long: Protein MATERNALLY EXPRESSED GENE 6 (61 aa).

C38 and C60 are oxidised to a cystine.

The protein belongs to the MEG family. In terms of tissue distribution, ubiquitous.

In Zea mays (Maize), this protein is Protein MATERNALLY EXPRESSED GENE 6 (MEG6).